Here is a 248-residue protein sequence, read N- to C-terminus: PF03932 family protein CutC (248 aa).

Belongs to the CutC family.

Its subcellular location is the cytoplasm. In Porphyromonas gingivalis (strain ATCC BAA-308 / W83), this protein is PF03932 family protein CutC.